The following is a 329-amino-acid chain: 4-hydroxythreonine-4-phosphate dehydrogenase (329 aa).

Residues histidine 136 and threonine 137 each contribute to the substrate site. A divalent metal cation is bound by residues histidine 166, histidine 211, and histidine 266. Residues lysine 274, asparagine 283, and arginine 292 each contribute to the substrate site.

The protein belongs to the PdxA family. In terms of assembly, homodimer. The cofactor is Zn(2+). It depends on Mg(2+) as a cofactor. Requires Co(2+) as cofactor.

It localises to the cytoplasm. It catalyses the reaction 4-(phosphooxy)-L-threonine + NAD(+) = 3-amino-2-oxopropyl phosphate + CO2 + NADH. It participates in cofactor biosynthesis; pyridoxine 5'-phosphate biosynthesis; pyridoxine 5'-phosphate from D-erythrose 4-phosphate: step 4/5. Catalyzes the NAD(P)-dependent oxidation of 4-(phosphooxy)-L-threonine (HTP) into 2-amino-3-oxo-4-(phosphooxy)butyric acid which spontaneously decarboxylates to form 3-amino-2-oxopropyl phosphate (AHAP). This chain is 4-hydroxythreonine-4-phosphate dehydrogenase, found in Salmonella arizonae (strain ATCC BAA-731 / CDC346-86 / RSK2980).